A 181-amino-acid polypeptide reads, in one-letter code: Large ribosomal subunit protein uL10 (181 aa).

It belongs to the universal ribosomal protein uL10 family. In terms of assembly, part of the ribosomal stalk of the 50S ribosomal subunit. The N-terminus interacts with L11 and the large rRNA to form the base of the stalk. The C-terminus forms an elongated spine to which L12 dimers bind in a sequential fashion forming a multimeric L10(L12)X complex.

Its function is as follows. Forms part of the ribosomal stalk, playing a central role in the interaction of the ribosome with GTP-bound translation factors. In Nostoc sp. (strain PCC 7120 / SAG 25.82 / UTEX 2576), this protein is Large ribosomal subunit protein uL10.